A 358-amino-acid polypeptide reads, in one-letter code: Na(+)/H(+) exchange regulatory cofactor NHE-RF1 (358 aa).

At Ser-2 the chain carries N-acetylserine. Phosphoserine is present on residues Ser-2 and Ser-46. Residues 14-94 (LCCLEKGPNG…AVRLLVVDPE (81 aa)) form the PDZ 1 domain. Residues 114 to 134 (QETPGQAEPAAAAEAQGAGNE) are compositionally biased toward low complexity. Disordered stretches follow at residues 114 to 192 (QETP…EASG) and 269 to 358 (SREA…FSNL). Basic and acidic residues predominate over residues 135–149 (NEPREADKSHPEQRK). Positions 154–234 (LCTMKKGPSG…ETKLLVVDRE (81 aa)) constitute a PDZ 2 domain. Residues Ser-162, Ser-269, Ser-280, Ser-290, and Ser-291 each carry the phosphoserine modification. Residues 287 to 306 (RSASSDTSEELNSQDSPPKQ) show a composition bias toward polar residues. Thr-293 carries the phosphothreonine modification. Phosphoserine occurs at positions 294, 299, and 302. A compositionally biased stretch (low complexity) spans 307–319 (DSTAPSSTSSSDP). Over residues 348 to 358 (WSKKNELFSNL) the composition is skewed to basic and acidic residues.

As to quaternary structure, homodimer, and heterodimer with NHERF2. Binds the N-termini of EZR, RDX and MSN. Binds the C-termini of PDGFRA, PDGFRB, ADRB2, NOS2 and CFTR. Binds ARHGAP17, EPI64, RACK1, OPRK1, GNAQ, CTNNB1 and PLCB3. Binds PDZK1. Interacts with CLCN3. Binds the C-terminus of PAG1. In resting T-cells, part of a PAG1-NHERF1-MSN complex which is disrupted upon TCR activation. Forms a complex with CFTR and SLC4A7. Forms a complex with SLC4A7 and ATP6V1B1. Interacts with TRPC4 (via the PDZ-binding domain). Directly interacts with HTR4. Interacts (via the PDZ 1 domain) with PODXL (via the C-terminal PDZ-binding motif DTHL); interaction is not detected in glomerular epithelium cells. Interacts (via the PDZ 1 domain) with PODXL (via the C-terminal PDZ-binding motif DTHL); the interaction take place early in the secretory pathway and is necessary for its apical membrane sorting. Interacts with SLC26A3. Interacts with MCC. Interacts with SLC34A1. Interacts (via the PDZ domains) with SLC26A6 isoform 4 and isoform 5. Interacts (via PDZ domains) with ACE2 (via PDZ-binding motif); the interaction may enhance ACE2 membrane residence. Phosphorylated on serine residues.

It localises to the cytoplasm. The protein resides in the apical cell membrane. It is found in the endomembrane system. Its subcellular location is the cell projection. The protein localises to the filopodium. It localises to the ruffle. The protein resides in the microvillus. Functionally, scaffold protein that connects plasma membrane proteins with members of the ezrin/moesin/radixin family and thereby helps to link them to the actin cytoskeleton and to regulate their surface expression. Necessary for recycling of internalized ADRB2. Was first known to play a role in the regulation of the activity and subcellular location of SLC9A3. Necessary for cAMP-mediated phosphorylation and inhibition of SLC9A3. Involved in sperm capacitation. May participate in the regulation of the chloride and bicarbonate homeostasis in spermatozoa. May enhance Wnt signaling. May participate in HTR4 targeting to microvilli. Involved in the regulation of phosphate reabsorption in the renal proximal tubules. The chain is Na(+)/H(+) exchange regulatory cofactor NHE-RF1 (NHERF1) from Macaca fascicularis (Crab-eating macaque).